The primary structure comprises 227 residues: Cytochrome c oxidase subunit 2 (227 aa).

Topologically, residues 1–14 are mitochondrial intermembrane; sequence MAHPLQLGLQDASS. The helical transmembrane segment at 15 to 45 threads the bilayer; the sequence is PIMEELLYFHDHALMIVFLISSLVLYTISLM. Topologically, residues 46 to 59 are mitochondrial matrix; it reads LTTKLMHTSTMNAQ. The chain crosses the membrane as a helical span at residues 60–87; it reads MVETMWTILPAVILTSIALPSLRILYMT. Residues 88–227 are Mitochondrial intermembrane-facing; that stretch reads DEINNPLLTI…HFETWSTLTS (140 aa). Residues His161, Cys196, Glu198, Cys200, His204, and Met207 each contribute to the Cu cation site. Glu198 contacts Mg(2+).

Belongs to the cytochrome c oxidase subunit 2 family. In terms of assembly, component of the cytochrome c oxidase (complex IV, CIV), a multisubunit enzyme composed of 14 subunits. The complex is composed of a catalytic core of 3 subunits MT-CO1, MT-CO2 and MT-CO3, encoded in the mitochondrial DNA, and 11 supernumerary subunits COX4I, COX5A, COX5B, COX6A, COX6B, COX6C, COX7A, COX7B, COX7C, COX8 and NDUFA4, which are encoded in the nuclear genome. The complex exists as a monomer or a dimer and forms supercomplexes (SCs) in the inner mitochondrial membrane with NADH-ubiquinone oxidoreductase (complex I, CI) and ubiquinol-cytochrome c oxidoreductase (cytochrome b-c1 complex, complex III, CIII), resulting in different assemblies (supercomplex SCI(1)III(2)IV(1) and megacomplex MCI(2)III(2)IV(2)). Found in a complex with TMEM177, COA6, COX18, COX20, SCO1 and SCO2. Interacts with TMEM177 in a COX20-dependent manner. Interacts with COX20. Interacts with COX16. Cu cation serves as cofactor.

The protein resides in the mitochondrion inner membrane. The enzyme catalyses 4 Fe(II)-[cytochrome c] + O2 + 8 H(+)(in) = 4 Fe(III)-[cytochrome c] + 2 H2O + 4 H(+)(out). In terms of biological role, component of the cytochrome c oxidase, the last enzyme in the mitochondrial electron transport chain which drives oxidative phosphorylation. The respiratory chain contains 3 multisubunit complexes succinate dehydrogenase (complex II, CII), ubiquinol-cytochrome c oxidoreductase (cytochrome b-c1 complex, complex III, CIII) and cytochrome c oxidase (complex IV, CIV), that cooperate to transfer electrons derived from NADH and succinate to molecular oxygen, creating an electrochemical gradient over the inner membrane that drives transmembrane transport and the ATP synthase. Cytochrome c oxidase is the component of the respiratory chain that catalyzes the reduction of oxygen to water. Electrons originating from reduced cytochrome c in the intermembrane space (IMS) are transferred via the dinuclear copper A center (CU(A)) of subunit 2 and heme A of subunit 1 to the active site in subunit 1, a binuclear center (BNC) formed by heme A3 and copper B (CU(B)). The BNC reduces molecular oxygen to 2 water molecules using 4 electrons from cytochrome c in the IMS and 4 protons from the mitochondrial matrix. The polypeptide is Cytochrome c oxidase subunit 2 (MT-CO2) (Galeopterus variegatus (Malayan flying lemur)).